Here is a 163-residue protein sequence, read N- to C-terminus: MDALEEESFALSFSSTSDAEFDAVVGYLEDIIMDDEFQLLQRNFMDKYYLEFEDTEENKLIYTPIFNEYISLVEKYIEEQLLQRIPGFNMAAFTTTLQHHKDEVAGDIFDMLLTFTDFLAFKEMFLDYRAEKEGRGLDLSSGLVVTSLCKSSSLPASQNNLRH.

The protein belongs to the ARL2BP family. In terms of assembly, interacts with GTP bound ARL2 and ARL3; the complex ARL2-ARL2BP as well as ARL2BP alone, binds to SLC25A4/ANT1. Interaction with ARL2 may be required for cilia basal body localization. Interacts with STAT3; interaction is enhanced with ARL2. Found in a complex with ARL2BP, ARL2 and SLC25A6. Found in a complex with ARL2, ARL2BP and SLC25A4. Interacts with STAT2, STAT3 and STAT4.

The protein localises to the cytoplasm. Its subcellular location is the mitochondrion intermembrane space. It is found in the cytoskeleton. The protein resides in the microtubule organizing center. It localises to the centrosome. The protein localises to the nucleus. Its subcellular location is the spindle. It is found in the cilium basal body. Its function is as follows. Together with ARL2, plays a role in the nuclear translocation, retention and transcriptional activity of STAT3. May play a role as an effector of ARL2. In Pongo abelii (Sumatran orangutan), this protein is ADP-ribosylation factor-like protein 2-binding protein (ARL2BP).